The following is a 294-amino-acid chain: Formate dehydrogenase, nitrate-inducible, iron-sulfur subunit (294 aa).

At 1-256 (MAMETQDIIK…DTSVSLWKGA (256 aa)) the chain is on the periplasmic side. 4Fe-4S ferredoxin-type domains are found at residues 30–58 (VAKL…IRDE), 91–123 (LEWL…QYAN), 124–153 (GIVD…LNKE), and 158–189 (YKCT…FGTK). [4Fe-4S] cluster-binding residues include Cys39, Cys42, Cys45, Cys49, Cys100, Cys103, Cys108, Cys112, Cys133, Cys136, Cys139, Cys143, Cys160, Cys163, Cys175, and Cys179. Residues 257–279 (LKPLAAAGFIATFAGLIFHYIGI) form a helical membrane-spanning segment. Topologically, residues 280–294 (GPNKEVDDDEEDHHE) are cytoplasmic.

As to quaternary structure, trimer of heterotrimers, consisting of subunits alpha, beta and gamma. [4Fe-4S] cluster is required as a cofactor.

The protein localises to the cell inner membrane. In terms of biological role, formate dehydrogenase allows E.coli to use formate as major electron donor during anaerobic respiration, when nitrate is used as electron acceptor. The beta subunit FdnH is an electron transfer unit containing 4 iron-sulfur clusters; it serves as a conduit for electrons that are transferred from the formate oxidation site in the alpha subunit (FdnG) to the menaquinone associated with the gamma subunit (FdnI) of formate dehydrogenase-N. Formate dehydrogenase-N is part of a system that generates proton motive force, together with the dissimilatory nitrate reductase (Nar). The chain is Formate dehydrogenase, nitrate-inducible, iron-sulfur subunit (fdnH) from Escherichia coli (strain K12).